Consider the following 491-residue polypeptide: UDP-N-acetylmuramate--L-alanine ligase (491 aa).

126–132 contacts ATP; the sequence is GTHGKTT.

It belongs to the MurCDEF family.

The protein localises to the cytoplasm. It carries out the reaction UDP-N-acetyl-alpha-D-muramate + L-alanine + ATP = UDP-N-acetyl-alpha-D-muramoyl-L-alanine + ADP + phosphate + H(+). It participates in cell wall biogenesis; peptidoglycan biosynthesis. Its function is as follows. Cell wall formation. This Escherichia coli (strain K12 / MC4100 / BW2952) protein is UDP-N-acetylmuramate--L-alanine ligase.